A 491-amino-acid chain; its full sequence is MDSISTAILLLILALICLLLTTSSKGKGRLPPGPRALPFLGNLLQLRSQDMLTSLTKLSKEFGAVYTVYLGPRRVVVLSGYQAVKEALVDQAEEFSGRGDYPAFFNFTKGNGIAFSNGDRWKALRKYSLQILRNFGMGKRTIEERILEEGHFLLEELRKTQGKPFDPTFVVSRSVSNIICSVIFGSRFDYDDDRLLTIIHLINENFQIMSSPWGEMYNIFPNLLDWVPGPHRRLFKNYGRMKNLIARSVREHQASLDPNSPRDFIDCFLTKMAQEKQDPLSHFFMDTLLMTTHNLLFGGTETVGTTLRHAFRLLMKYPEVQVRVQEEIDRVVGRERLPTVEDRAEMPYTDAVIHEVQRFADIIPMSLPHRVTRDTNFRGFTIPRGTDVITLLNTVHYDPSQFLKPKEFNPEHFLDANMSFKKSPAFMPFSAGRRLCLGEALARMELFLYLTAILQSFSLQPLGAPEDIDLTPLSSGLGNVPRPYQLCVRAR.

Cysteine 436 lines the heme pocket.

Belongs to the cytochrome P450 family. Heme is required as a cofactor. As to expression, lung specific.

The protein localises to the endoplasmic reticulum membrane. Its subcellular location is the microsome membrane. The enzyme catalyses an organic molecule + reduced [NADPH--hemoprotein reductase] + O2 = an alcohol + oxidized [NADPH--hemoprotein reductase] + H2O + H(+). Its function is as follows. Bioactivates 3-methylindole (3MI) by dehydrogenation to the putative electrophile 3-methylene-indolenine. Stereoselectively catalyzes the formation of the 1R,2S-oxide from naphthalene. Lack activity with other common P450 substrates including 7-ethoxycoumarin. In Capra hircus (Goat), this protein is Cytochrome P450 2F3 (CYP2F3).